We begin with the raw amino-acid sequence, 192 residues long: MRLNIIDLREIGALTIECEDYLSKLIAVACSLDDLKYNFSLYAKADFEWCNERLINYVIAGYIGQNSSRVKFLNLEFISSGEWLNAIFTSGNKLDVDHILITMTYINKNMPFQNIIEEAEYISGKNTWLDAPTPLKTILDLLDDACLYKYPVKIIVPTVITTDPLAIELLEKYNSLDIEYIRLKSRIEWNSE.

This is an uncharacterized protein from Acanthamoeba polyphaga mimivirus (APMV).